Consider the following 481-residue polypeptide: ATP synthase subunit beta, chloroplastic (481 aa).

161–168 (GGAGVGKT) lines the ATP pocket.

The protein belongs to the ATPase alpha/beta chains family. F-type ATPases have 2 components, CF(1) - the catalytic core - and CF(0) - the membrane proton channel. CF(1) has five subunits: alpha(3), beta(3), gamma(1), delta(1), epsilon(1). CF(0) has four main subunits: a(1), b(1), b'(1) and c(9-12).

It is found in the plastid. The protein localises to the chloroplast thylakoid membrane. It catalyses the reaction ATP + H2O + 4 H(+)(in) = ADP + phosphate + 5 H(+)(out). Its function is as follows. Produces ATP from ADP in the presence of a proton gradient across the membrane. The catalytic sites are hosted primarily by the beta subunits. This Mesostigma viride (Green alga) protein is ATP synthase subunit beta, chloroplastic.